The following is a 286-amino-acid chain: ATP synthase gamma chain (286 aa).

The protein belongs to the ATPase gamma chain family. F-type ATPases have 2 components, CF(1) - the catalytic core - and CF(0) - the membrane proton channel. CF(1) has five subunits: alpha(3), beta(3), gamma(1), delta(1), epsilon(1). CF(0) has three main subunits: a, b and c.

Its subcellular location is the cell inner membrane. In terms of biological role, produces ATP from ADP in the presence of a proton gradient across the membrane. The gamma chain is believed to be important in regulating ATPase activity and the flow of protons through the CF(0) complex. The protein is ATP synthase gamma chain of Pseudomonas fluorescens (strain Pf0-1).